The sequence spans 447 residues: Na(+)-translocating NADH-quinone reductase subunit A (447 aa).

This sequence belongs to the NqrA family. As to quaternary structure, composed of six subunits; NqrA, NqrB, NqrC, NqrD, NqrE and NqrF.

It catalyses the reaction a ubiquinone + n Na(+)(in) + NADH + H(+) = a ubiquinol + n Na(+)(out) + NAD(+). NQR complex catalyzes the reduction of ubiquinone-1 to ubiquinol by two successive reactions, coupled with the transport of Na(+) ions from the cytoplasm to the periplasm. NqrA to NqrE are probably involved in the second step, the conversion of ubisemiquinone to ubiquinol. The polypeptide is Na(+)-translocating NADH-quinone reductase subunit A (Saccharophagus degradans (strain 2-40 / ATCC 43961 / DSM 17024)).